The sequence spans 146 residues: Flagellar assembly factor FliW 1 (146 aa).

Belongs to the FliW family. Interacts with translational regulator CsrA and flagellin(s).

It is found in the cytoplasm. Its function is as follows. Acts as an anti-CsrA protein, binds CsrA and prevents it from repressing translation of its target genes, one of which is flagellin. Binds to flagellin and participates in the assembly of the flagellum. This chain is Flagellar assembly factor FliW 1, found in Helicobacter hepaticus (strain ATCC 51449 / 3B1).